The following is a 369-amino-acid chain: tRNA-specific 2-thiouridylase MnmA (369 aa).

ATP-binding positions include 16–23 and Met-42; that span reads AMSGGVDS. Cys-110 functions as the Nucleophile in the catalytic mechanism. Cysteines 110 and 206 form a disulfide. Gly-134 contacts ATP. Positions 156–158 are interaction with tRNA; sequence KDQ. The active-site Cysteine persulfide intermediate is Cys-206.

The protein belongs to the MnmA/TRMU family.

It localises to the cytoplasm. It carries out the reaction S-sulfanyl-L-cysteinyl-[protein] + uridine(34) in tRNA + AH2 + ATP = 2-thiouridine(34) in tRNA + L-cysteinyl-[protein] + A + AMP + diphosphate + H(+). In terms of biological role, catalyzes the 2-thiolation of uridine at the wobble position (U34) of tRNA, leading to the formation of s(2)U34. The polypeptide is tRNA-specific 2-thiouridylase MnmA (Orientia tsutsugamushi (strain Boryong) (Rickettsia tsutsugamushi)).